The following is a 468-amino-acid chain: Probable Xaa-Pro aminopeptidase PEPP (468 aa).

Mn(2+) contacts are provided by Asp-264, Asp-275, Glu-398, and Glu-438.

The protein belongs to the peptidase M24B family. Mn(2+) serves as cofactor.

The enzyme catalyses Release of any N-terminal amino acid, including proline, that is linked to proline, even from a dipeptide or tripeptide.. Its function is as follows. Catalyzes the removal of a penultimate prolyl residue from the N-termini of peptides. The chain is Probable Xaa-Pro aminopeptidase PEPP (PEPP) from Ajellomyces dermatitidis (strain ER-3 / ATCC MYA-2586) (Blastomyces dermatitidis).